The primary structure comprises 235 residues: Purine nucleoside phosphorylase DeoD-type (235 aa).

Histidine 4 lines the a purine D-ribonucleoside pocket. Residues glycine 20, arginine 24, arginine 43, and arginine 87–threonine 90 each bind phosphate. A purine D-ribonucleoside is bound by residues glutamate 162, glutamate 179 to glutamate 181, and serine 203 to aspartate 204. Catalysis depends on aspartate 204, which acts as the Proton donor.

It belongs to the PNP/UDP phosphorylase family. As to quaternary structure, homohexamer; trimer of homodimers.

The catalysed reaction is a purine D-ribonucleoside + phosphate = a purine nucleobase + alpha-D-ribose 1-phosphate. The enzyme catalyses a purine 2'-deoxy-D-ribonucleoside + phosphate = a purine nucleobase + 2-deoxy-alpha-D-ribose 1-phosphate. In terms of biological role, catalyzes the reversible phosphorolytic breakdown of the N-glycosidic bond in the beta-(deoxy)ribonucleoside molecules, with the formation of the corresponding free purine bases and pentose-1-phosphate. This Bacillus cereus (strain ATCC 14579 / DSM 31 / CCUG 7414 / JCM 2152 / NBRC 15305 / NCIMB 9373 / NCTC 2599 / NRRL B-3711) protein is Purine nucleoside phosphorylase DeoD-type.